Reading from the N-terminus, the 62-residue chain is UPF0434 protein FTL_1400 (62 aa).

Belongs to the UPF0434 family.

In Francisella tularensis subsp. holarctica (strain LVS), this protein is UPF0434 protein FTL_1400.